A 269-amino-acid chain; its full sequence is HTH-type transcriptional activator ArnR (269 aa).

The Cytoplasmic segment spans residues 1–218 (MTKSLFDVLK…LLRLTNSYTL (218 aa)). The segment at residues 39 to 62 (TTEISQTINTSRKSIIDAIRKLVD) is a DNA-binding region (H-T-H motif). Residues 219-239 (EMANVKVMGFILISLPLLMYF) traverse the membrane as a helical segment. Residues 240–242 (RDQ) are Extracellular-facing. The helical transmembrane segment at 243 to 263 (LGLIELPWLYAVIFLALLSVF) threads the bilayer. The Cytoplasmic portion of the chain corresponds to 264–269 (AQILSR).

It localises to the cell membrane. Its function is as follows. Involved in regulation of archaellar gene expression. Activates flaB transcription upon nutrient starvation by acting on the flaB promoter. The polypeptide is HTH-type transcriptional activator ArnR (Sulfolobus acidocaldarius (strain ATCC 33909 / DSM 639 / JCM 8929 / NBRC 15157 / NCIMB 11770)).